The primary structure comprises 293 residues: Haloalkane dehalogenase (293 aa).

An AB hydrolase-1 domain is found at 34-158 (PVLFLHGNPT…FQAFRTADVG (125 aa)). D106 functions as the Nucleophile in the catalytic mechanism. The active-site Proton donor is the E130. H272 (proton acceptor) is an active-site residue.

Belongs to the haloalkane dehalogenase family. Type 2 subfamily. As to quaternary structure, monomer.

It catalyses the reaction 1-haloalkane + H2O = a halide anion + a primary alcohol + H(+). It participates in xenobiotic degradation; haloalkane degradation. Its pathway is xenobiotic degradation; 1,3-dichloropropene degradation. In terms of biological role, catalyzes hydrolytic cleavage of carbon-halogen bonds in halogenated aliphatic compounds, leading to the formation of the corresponding primary alcohols, halide ions and protons. Has a broad substrate specificity, as it is able to dehalogenate mono- and di- chlorinated and brominated alkanes (up to at least C10), and the two isomers of 1,3-dichloropropene to 3-chloroallyl alcohol; the highest activity was found with 1,2-dibromoethane, while no activity was observed with the analog 1,2-dichloroethane. The protein is Haloalkane dehalogenase (dhaA) of Pseudomonas pavonaceae.